The sequence spans 513 residues: MDSSNAIFKSFLGKAPEWYKICIIAFLVINPLIYFFISPFVAGWALVAEFIFTLSMALKCYPLQPGGLLAIEAVFIGMTSAHHVKEEIMANFEVILLLMFMVAGIYFMKQLLLYVFTKLLIVIHSKKILSLAFCLSATFLSAFLDALTVIAVIISVGTGFYGVYHKVASGNSFEDSTDISNDEKIITNKEILEQFRAFLRSPLMHAAVGSALGGVMTMVGEPQNLIIAGQAEWGFVEFLLRVLPVSLPVLICGVITCLLLEHFKIFGYGARLPRRVWGVLARYNLLKEQRMTQQDRVKMGIQALAGIWLVVGLALHLADVGIIGLTIIIICTAFCGITDEHAIGRSFQEPMPFTALIVVFFTVVAVIVDLKLFEPIISYVLSADPHSQLALFYVFNGLLSMISDNVFVGTVYINEAKTALESAIISREQFDLIAVAINTGTNLPSVATPNGQAAFLFLLTSPFAPLIRLSYGKMLYMALPYTIVLSIIGFLSLEFLLPPLTELMSNWGWIITR.

The next 9 helical transmembrane spans lie at 21-41 (ICII…SPFV), 88-108 (IMAN…IYFM), 119-139 (LLIV…SATF), 243-263 (LPVS…LEHF), 299-318 (MGIQ…LHLA), 322-344 (IIGL…HAIG), 350-370 (PMPF…IVDL), 389-409 (LALF…VFVG), and 477-497 (MALP…EFLL).

This sequence belongs to the NhaB Na(+)/H(+) (TC 2.A.34) antiporter family.

Its subcellular location is the cell inner membrane. The enzyme catalyses 2 Na(+)(in) + 3 H(+)(out) = 2 Na(+)(out) + 3 H(+)(in). Functionally, na(+)/H(+) antiporter that extrudes sodium in exchange for external protons. The chain is Na(+)/H(+) antiporter NhaB from Actinobacillus pleuropneumoniae serotype 5b (strain L20).